The sequence spans 2491 residues: Cation-independent mannose-6-phosphate receptor (2491 aa).

The signal sequence occupies residues 1–40 (MGAAAGRSPHLGPAPARRPQRSLLLLQLLLLVAAPGSTQA). Residues 41–2304 (QAAPFPELCS…MHKGLSERSQ (2264 aa)) are Lumenal-facing. MRH domains are found at residues 47–163 (ELCS…ACKK), 172–320 (VPCY…ACHR), 326–468 (KTCS…ACVK), 473–619 (LLCG…ACVL), 625–762 (ENCT…ACPE), 765–924 (LECV…ACPI), 932–1079 (QACS…ACVP), 1082–1219 (VDCQ…ACPV), 1225–1363 (DNCE…ACPP), 1367–1508 (TECS…ACPM), 1514–1648 (DDCQ…ACEQ), and 1650–1797 (TECS…VCPD). Intrachain disulfides connect C49-C69 and C77-C84. N-linked (GlcNAc...) asparagine glycosylation is present at N112. 8 cysteine pairs are disulfide-bonded: C117/C149, C134/C161, C174/C212, C228/C235, C275/C306, C288/C318, C328/C366, and C374/C382. N400 and N435 each carry an N-linked (GlcNAc...) asparagine glycan. 4 disulfide bridges follow: C420–C454, C434–C466, C475–C519, and C531–C538. Residues N543 and N581 are each glycosylated (N-linked (GlcNAc...) asparagine). Cystine bridges form between C572/C605 and C586/C617. A glycan (N-linked (GlcNAc...) asparagine) is linked at N626. 5 cysteine pairs are disulfide-bonded: C627–C664, C672–C679, C731–C760, C767–C814, and C823–C830. A glycan (N-linked (GlcNAc...) asparagine) is linked at N747. Residue N871 is glycosylated (N-linked (GlcNAc...) asparagine). 7 cysteine pairs are disulfide-bonded: C875-C910, C893-C922, C934-C970, C976-C987, C1042-C1077, C1084-C1125, and C1134-C1142. 2 N-linked (GlcNAc...) asparagine glycosylation sites follow: N951 and N957. N1164 carries N-linked (GlcNAc...) asparagine glycosylation. 4 disulfides stabilise this stretch: C1177/C1205, C1190/C1217, C1227/C1262, and C1270/C1282. The N-linked (GlcNAc...) asparagine glycan is linked to N1246. N-linked (GlcNAc...) asparagine glycosylation is present at N1312. Cystine bridges form between C1319/C1349, C1333/C1361, C1369/C1408, C1420/C1427, C1461/C1494, C1476/C1506, C1516/C1553, C1559/C1566, C1598/C1634, C1614/C1646, C1652/C1695, C1706/C1713, C1750/C1783, C1766/C1795, C1804/C1839, C1850/C1856, C1893/C1975, C1903/C1927, C1917/C1942, C1957/C1987, C1994/C2029, C2039/C2046, C2082/C2113, and C2096/C2125. A glycan (N-linked (GlcNAc...) asparagine) is linked at N1656. The N-linked (GlcNAc...) asparagine glycan is linked to N1757. Positions 1802 to 1989 (DGCTLTDEQL…EWKTKVVCPP (188 aa)) constitute a Fibronectin type-II domain. A glycan (N-linked (GlcNAc...) asparagine) is linked at N1816. 2 MRH domains span residues 1992–2127 (LECK…ACAV) and 2135–2280 (VNGT…VCPL). N2085 is a glycosylation site (N-linked (GlcNAc...) asparagine). N2136 carries an N-linked (GlcNAc...) asparagine glycan. 3 disulfide bridges follow: C2188-C2194, C2232-C2266, and C2248-C2278. The helical transmembrane segment at 2305–2327 (AVGAVLSLLLVALTCCLLALLLY) threads the bilayer. Over 2328-2491 (KKERRETVIS…DDSDEDLLHI (164 aa)) the chain is Cytoplasmic. K2352 carries the post-translational modification N6-acetyllysine. At S2409 the chain carries Phosphoserine. A disordered region spans residues 2424-2491 (GRGAGAESSH…DDSDEDLLHI (68 aa)). The residue at position 2425 (R2425) is an Omega-N-methylarginine. The segment covering 2444–2459 (QEREDDRVGLVRGEKA) has biased composition (basic and acidic residues). Residues 2464-2477 (SSSAQQKTVSSTKL) show a composition bias toward polar residues. Phosphoserine occurs at positions 2479 and 2484. Positions 2479-2491 (SFHDDSDEDLLHI) are enriched in basic and acidic residues.

It belongs to the MRL1/IGF2R family. As to quaternary structure, binds HA-I and HA-II plasma membrane adapters. Interacts with DPP4; the interaction is direct. Binds GGA1, GGA2 and GGA3. Interacts with the heterotrimeric retromer cargo-selective complex (CSC), formed by VPS26 (VPS26A or VPS26B), VPS29 and VPS35; which is involved in retrograde trafficking of the receptor from endosomes to the Golgi apparatus. Palmitoylated. Undergoes cysteine S-palmitoylation which promotes interaction with the retromer cargo-selective complex which mediates its retrograde trafficking to the Golgi apparatus.

The protein localises to the golgi apparatus membrane. It is found in the endosome membrane. Functionally, mediates the transport of phosphorylated lysosomal enzymes from the Golgi complex and the cell surface to lysosomes. Lysosomal enzymes bearing phosphomannosyl residues bind specifically to mannose-6-phosphate receptors in the Golgi apparatus and the resulting receptor-ligand complex is transported to an acidic prelysosomal compartment where the low pH mediates the dissociation of the complex. The receptor is then recycled back to the Golgi for another round of trafficking through its binding to the retromer. This receptor also binds IGF2. Acts as a positive regulator of T-cell coactivation by binding DPP4. The chain is Cation-independent mannose-6-phosphate receptor (IGF2R) from Homo sapiens (Human).